A 104-amino-acid chain; its full sequence is Large ribosomal subunit protein bL21 (104 aa).

This sequence belongs to the bacterial ribosomal protein bL21 family. In terms of assembly, part of the 50S ribosomal subunit. Contacts protein L20.

This protein binds to 23S rRNA in the presence of protein L20. The protein is Large ribosomal subunit protein bL21 of Kosmotoga olearia (strain ATCC BAA-1733 / DSM 21960 / TBF 19.5.1).